The primary structure comprises 381 residues: Guanine nucleotide-binding protein G(olf) subunit alpha (381 aa).

The segment at 1–25 (MGCLGNSSKTAEDQGVDEKERREAN) is disordered. A lipid anchor (N-palmitoyl glycine) is attached at G2. Residue C3 is the site of S-palmitoyl cysteine attachment. Residues 10-25 (TAEDQGVDEKERREAN) show a composition bias toward basic and acidic residues. One can recognise a G-alpha domain in the interval 41–381 (ATHRLLLLGA…RMHLKQYELL (341 aa)). The interval 44–57 (RLLLLGAGESGKST) is G1 motif. Positions 52, 53, 54, 55, 56, and 57 each coordinate GTP. A Mg(2+)-binding site is contributed by S56. T178 is modified (phosphothreonine). The segment at 183–191 (DLLRCRVLT) is G2 motif. The GTP site is built by L185, R186, and T191. Mg(2+) contacts are provided by T191 and D210. The interval 206-215 (FHMFDVGGQR) is G3 motif. Residues G213, N279, K280, D282, and A353 each coordinate GTP. Positions 275–282 (ILFLNKQD) are G4 motif. The interval 351–356 (TCAVDT) is G5 motif.

The protein belongs to the G-alpha family. G(s) subfamily. G proteins are composed of 3 units; alpha, beta and gamma. The alpha chain contains the guanine nucleotide binding site. Interacts with GAS2L2. Interacts (GDP-bound form) with RIC8B (via C-terminus); promoting GNAL folding and association with the plasma membrane.

Its subcellular location is the cell membrane. It catalyses the reaction GTP + H2O = GDP + phosphate + H(+). Functionally, guanine nucleotide-binding protein (G protein) involved as transducer in olfactory signal transduction controlled by G protein-coupled receptors (GPCRs). Contains the guanine nucleotide binding site and alternates between an active, GTP-bound state and an inactive, GDP-bound state. Signaling by an activated GPCR promotes GDP release and GTP binding. The alpha subunit has a low GTPase activity that converts bound GTP to GDP, thereby terminating the signal. Both GDP release and GTP hydrolysis are modulated by numerous regulatory proteins. GNAL/G(olf) alpha specifically mediates olfactory signal transduction within the olfactory neuroepithelium and the basal ganglia following GPCRs activation. Acts by promoting the specific activation of adenylyl cyclase ADCY3, resulting in increased levels of the signaling molecule cAMP. This chain is Guanine nucleotide-binding protein G(olf) subunit alpha, found in Rattus norvegicus (Rat).